The sequence spans 228 residues: UPF0758 protein CLK_2387 (228 aa).

The MPN domain occupies 106-228; it reads KISTPLDVSN…YVSMKEKGTI (123 aa). Residues His-177, His-179, and Asp-190 each coordinate Zn(2+). A JAMM motif motif is present at residues 177–190; sequence HNHPSGDPTPSKED.

It belongs to the UPF0758 family.

This is UPF0758 protein CLK_2387 from Clostridium botulinum (strain Loch Maree / Type A3).